A 222-amino-acid chain; its full sequence is 2-C-methyl-D-erythritol 4-phosphate cytidylyltransferase (222 aa).

Belongs to the IspD/TarI cytidylyltransferase family. IspD subfamily.

The enzyme catalyses 2-C-methyl-D-erythritol 4-phosphate + CTP + H(+) = 4-CDP-2-C-methyl-D-erythritol + diphosphate. Its pathway is isoprenoid biosynthesis; isopentenyl diphosphate biosynthesis via DXP pathway; isopentenyl diphosphate from 1-deoxy-D-xylulose 5-phosphate: step 2/6. Its function is as follows. Catalyzes the formation of 4-diphosphocytidyl-2-C-methyl-D-erythritol from CTP and 2-C-methyl-D-erythritol 4-phosphate (MEP). The sequence is that of 2-C-methyl-D-erythritol 4-phosphate cytidylyltransferase from Porphyromonas gingivalis (strain ATCC 33277 / DSM 20709 / CIP 103683 / JCM 12257 / NCTC 11834 / 2561).